A 60-amino-acid polypeptide reads, in one-letter code: Cytochrome c oxidase subunit 9, mitochondrial (60 aa).

At 1–15 the chain is on the mitochondrial matrix side; it reads MSALAPITGTLKKRI. Residues 16 to 38 form a helical membrane-spanning segment; the sequence is ITDIVIGFSLGGVMASYWWWGFH. The Mitochondrial intermembrane segment spans residues 39 to 57; that stretch reads KNVIDRREAFYADLAEKKK. A propeptide spans 58–60 (removed in mature form); the sequence is AEN.

This sequence belongs to the fungal cytochrome c oxidase subunit 7a family. In terms of assembly, component of the cytochrome c oxidase (complex IV, CIV), a multisubunit enzyme composed of a catalytic core of 3 subunits and several supernumerary subunits. The complex exists as a monomer or a dimer and forms supercomplexes (SCs) in the inner mitochondrial membrane with ubiquinol-cytochrome c oxidoreductase (cytochrome b-c1 complex, complex III, CIII).

It localises to the mitochondrion inner membrane. The protein operates within energy metabolism; oxidative phosphorylation. In terms of biological role, component of the cytochrome c oxidase, the last enzyme in the mitochondrial electron transport chain which drives oxidative phosphorylation. The respiratory chain contains 3 multisubunit complexes succinate dehydrogenase (complex II, CII), ubiquinol-cytochrome c oxidoreductase (cytochrome b-c1 complex, complex III, CIII) and cytochrome c oxidase (complex IV, CIV), that cooperate to transfer electrons derived from NADH and succinate to molecular oxygen, creating an electrochemical gradient over the inner membrane that drives transmembrane transport and the ATP synthase. Cytochrome c oxidase is the component of the respiratory chain that catalyzes the reduction of oxygen to water. Electrons originating from reduced cytochrome c in the intermembrane space (IMS) are transferred via the dinuclear copper A center (CU(A)) of subunit 2 and heme A of subunit 1 to the active site in subunit 1, a binuclear center (BNC) formed by heme A3 and copper B (CU(B)). The BNC reduces molecular oxygen to 2 water molecules using 4 electrons from cytochrome c in the IMS and 4 protons from the mitochondrial matrix. The sequence is that of Cytochrome c oxidase subunit 9, mitochondrial (COX9) from Candida glabrata (strain ATCC 2001 / BCRC 20586 / JCM 3761 / NBRC 0622 / NRRL Y-65 / CBS 138) (Yeast).